The sequence spans 101 residues: Thioredoxin 1 (101 aa).

The Thioredoxin domain occupies 2-101; it reads AQTLDDLIRT…MRQEVLKAIG (100 aa). A disulfide bond links Cys-25 and Cys-28.

Belongs to the thioredoxin family.

Functionally, participates in various redox reactions through the reversible oxidation of its active center dithiol to a disulfide and catalyzes dithiol-disulfide exchange reactions. This chain is Thioredoxin 1 (trx1), found in Chlorobaculum tepidum (strain ATCC 49652 / DSM 12025 / NBRC 103806 / TLS) (Chlorobium tepidum).